A 129-amino-acid polypeptide reads, in one-letter code: Iron-sulfur cluster assembly 1 homolog, mitochondrial (129 aa).

The N-terminal 12 residues, 1–12 (MASSVVRATVRA), are a transit peptide targeting the mitochondrion. The Fe cation site is built by Cys57, Cys121, and Cys123.

The protein belongs to the HesB/IscA family.

It is found in the mitochondrion. In terms of biological role, involved in the maturation of mitochondrial 4Fe-4S proteins functioning late in the iron-sulfur cluster assembly pathway. Probably involved in the binding of an intermediate of Fe/S cluster assembly. In Gallus gallus (Chicken), this protein is Iron-sulfur cluster assembly 1 homolog, mitochondrial (ISCA1).